We begin with the raw amino-acid sequence, 160 residues long: Transcription elongation factor GreA (160 aa).

The stretch at 1–72 forms a coiled coil; the sequence is MAEKTYPMTL…QISSLETKIR (72 aa).

The protein belongs to the GreA/GreB family.

Its function is as follows. Necessary for efficient RNA polymerase transcription elongation past template-encoded arresting sites. The arresting sites in DNA have the property of trapping a certain fraction of elongating RNA polymerases that pass through, resulting in locked ternary complexes. Cleavage of the nascent transcript by cleavage factors such as GreA or GreB allows the resumption of elongation from the new 3'terminus. GreA releases sequences of 2 to 3 nucleotides. The protein is Transcription elongation factor GreA of Streptococcus pneumoniae serotype 4 (strain ATCC BAA-334 / TIGR4).